A 130-amino-acid chain; its full sequence is Small ribosomal subunit protein uS8 (130 aa).

Belongs to the universal ribosomal protein uS8 family. Part of the 30S ribosomal subunit. Contacts proteins S5 and S12.

Its function is as follows. One of the primary rRNA binding proteins, it binds directly to 16S rRNA central domain where it helps coordinate assembly of the platform of the 30S subunit. The polypeptide is Small ribosomal subunit protein uS8 (Shewanella pealeana (strain ATCC 700345 / ANG-SQ1)).